A 601-amino-acid chain; its full sequence is Aspartate--tRNA ligase (601 aa).

L-aspartate is bound at residue Glu-183. Residues 207-210 (QIFK) are aspartate. Arg-229 contacts L-aspartate. Residues 229 to 231 (RDE) and Gln-238 each bind ATP. His-457 lines the L-aspartate pocket. Glu-497 contacts ATP. Position 504 (Arg-504) interacts with L-aspartate. Residue 549–552 (GIDR) participates in ATP binding.

This sequence belongs to the class-II aminoacyl-tRNA synthetase family. Type 1 subfamily. As to quaternary structure, homodimer.

The protein resides in the cytoplasm. It carries out the reaction tRNA(Asp) + L-aspartate + ATP = L-aspartyl-tRNA(Asp) + AMP + diphosphate. Its function is as follows. Catalyzes the attachment of L-aspartate to tRNA(Asp) in a two-step reaction: L-aspartate is first activated by ATP to form Asp-AMP and then transferred to the acceptor end of tRNA(Asp). This Leptospira interrogans serogroup Icterohaemorrhagiae serovar Lai (strain 56601) protein is Aspartate--tRNA ligase.